The sequence spans 733 residues: MTRWSMSMHCTLFLLFLLRLTCIFSDSDYLMGLGSYDITGPAADVNMMGYANMEQVASGVHFRLRARAFIVAEPYKKRIAFVNLDAGMASQLVTIKVIERLKQRYGELYTEENVAISGTHTHAGPGGYLQYILYLVTSLGFVHQSFNALVDGIEQSIIQAHENLRPGSILINKGELLDAGVNRSPSAYLNNPAHERSKYEYDVDKEMTLVKFVDDQWGPVARIMEDWFERENGCRSVDVESPRRVSSIISDPYDQDLMEMASSLLSTGGKTVTRMSSVARRVRSRFRHADKPRFVSAFCQTNCGDVSPNVLGAFCIDTGLPCEFNQSTCGGKNEQCYGRGPGYPDEFESTRIIGERQFKKAADLFTKASEEIQGKVDYRHAYVDFSQLEVTINGQNGGSEVVKTCPAAMGFGFAAGTTDGPGAFDFKQGDDQGNPFWRLVRNLLKNPTEEQVRCQRPKPILLDTGEMKQPYDWAPSILPVQILRIGQLVILCVPGEFTTMAGRRLRDAVKTVLKEGSNGREFSVVIAGLTNSYSQYIATFEEYQVQRYEGASTLYGPHTLSGYIQEFKKLANDLLSAQTTDPGPQPPDLLHKQISLLTPVVADMTPIGTAFGDVTSDVPRLSKFRKGADIVRVQFRSANPRNDLMTEGTFALVERWLEGRETWVPVYDDDDFCLRFKWSRPFKLSTQSTATIEWRIPETASPGVYRITHFGSAKTPISSIHHFSGSSSAFVVY.

Positions 1–25 (MTRWSMSMHCTLFLLFLLRLTCIFS) are cleaved as a signal peptide. The active-site Nucleophile is the Ser307. An N-linked (GlcNAc...) asparagine glycan is attached at Asn325.

It belongs to the neutral ceramidase family.

It localises to the secreted. The protein localises to the endoplasmic reticulum. The protein resides in the golgi apparatus. It carries out the reaction an N-acylsphing-4-enine + H2O = sphing-4-enine + a fatty acid. In terms of biological role, hydrolyzes the sphingolipid ceramide into sphingosine and free fatty acid. Promotes oxidative stress resistance. The protein is Neutral ceramidase 3 of Arabidopsis thaliana (Mouse-ear cress).